A 1753-amino-acid polypeptide reads, in one-letter code: MTVLQPPSSVCYPLNLPIVPNPNLDEATRKKLTLECRTGAAVELARSGVFVHGGLTLPLNLTIINSLQLQKELILYFGKQKDRNADFKTLADWISPEIFFLDLISRTWQRINTTIDTTSENELNNGLSFKERLFHSMCFTESNIYIFGGLMVSPHNGYELIATNELWKLDLKTKCWSLISENPQITRRFNHSMHVLNENNENQDTKLIIVGGLDNMDIPVKKIDIFNLRTSLWESESKSDENPASKGSSKILVNIDGMPISLSHDSNFSVLIENNQAEIPTLALYYPQREANTSRRGTDDGSFSTYAHDLDDKSKLPKHHHHHHGDLKYFESDDADENAVKTLMSPIVILPLLGNSQGARMTSNPTQNNKENSILQVPFHLQYPSGNYFNYNIVVIGFYPDPQPSNLHCFIYNIASGKWIRVNIACTECSISMHRFWKLLIWKSHHQALLLGTRTDDFCSPSVQKFDHILSFSLPMLNGYNKLVNTKHTRTNNGIANSHNLNVNLSLYDHLPYSNSSTIEHTNPYTVTQGYSLDDSGIPRLTSTATSQFENYSRYITVPLEMESTSSIFPPYAMVLGKDALEIFGKTLSDFEFITADGDSIGVPVYLLRKRWGRYFDSLLSNGYANTSFNYEFNGDTSNIISFSPHTASKTTKFGNSSQSSNGSLEKYFSKNGNSKSNSNTSLKKPHSVDFTSSTSSPKQRAISHNKLSPSEPILCADEEDSRSNTLKQHATGDTGLKETGTSNKRPISTTCSSTGMVFRVPFQDMKNSKLGLSEQSGRSTRASSVSPPPVYKKSTNDGNDSNCTLSNTPLVYRRASTVGTTTNSSVDDGFSSIRRASHPLQSYIIAKSSPSSISKASPAEKAFSRRKSSALRFIASPNQSRQTSFASTASTASVVSSTSGRRRNSNQISHLGSSASLPNSPILPVLNIPLPPQEKIPLEPLPPVPKAPSRRSSSLAEYVQFGRDSPVASRRSSHSTRKSSSSDARRISNSSLLRNTLDSQLLSNSYGSDIPYEASIQEYGMNNGRDEEEDGDNQDYGCISPSNIRPIFSTINAININGNFKEGEFFSSKSYINNEKSRRLSYISNPESVESTNSNNNAIIELEPLLTPRSLYMPWSTASVRAFAEFFYTAQINGKWLLAPVTLDLLIMAKIYEIPILYELITEVLYKIISKKEEGLSVTCEALLNLFQQKVSRYCNENEGKIRKQLDSSESYQDTLEIKRSLANIDNGYVDSYLLRNTSMAQSIHYTDDSNGETEIDMHHTGISSIGSLANRAVPTVFAGGPRDSHNSIGSIAFPSNSGVQNIRRSVSLFSPATKKKSSLSRETDPLDTSDQFTDDVPDSGPVSRQQNFPRRSSSFTETVPTEPTRYNYQNLDSSKSNRASDDKEEQNEQATLQDISNFDKYKVETLQKRNSNDGKDLDRTNDPLKNRGTEIPQNSSNLETDPFIRDSFDSDSGSSFRSDSDDLDSQLGILPFTKMNKKLQEQTSQEFDDSIDPLYKIGSSTPGSSRLHGSFSKYIRPNSQREDGSEYVNISSLENMVSPNALPPVDYVMKSIYRTSVLVNDSNLMTRTKEAIELSKVLKKLKKKVLQDISQMDDEMRETGKPIFARGSSSPTLSRQHSDVATPLKQQENTRPALKFASSSPISEGFRKSSIKFSQAPSTQISPRTSVTDFTASQQRRQHMNKRFSTQTTHSTSALFMNPAFMPSAVNTGRKESEGHCEDRSATANRTNRKEDATTNDNDNIAPFPFFGKRR.

Kelch repeat units lie at residues 143–198 (NIYI…VLNE) and 206–253 (KLII…KILV). Residue Thr-298 is modified to Phosphothreonine. The span at 651 to 664 (TTKFGNSSQSSNGS) shows a compositional bias: polar residues. Disordered regions lie at residues 651–753 (TTKF…TTCS) and 771–807 (LGLSEQSGRSTRASSVSPPPVYKKSTNDGNDSNCTLS). The span at 670 to 683 (SKNGNSKSNSNTSL) shows a compositional bias: low complexity. 4 stretches are compositionally biased toward polar residues: residues 690 to 699 (DFTSSTSSPK), 740 to 753 (TGTSNKRPISTTCS), 774 to 783 (SEQSGRSTRA), and 797 to 807 (NDGNDSNCTLS). Ser-838 is modified (phosphoserine). Disordered regions lie at residues 875–915 (IASP…LGSS), 938–957 (PLEPLPPVPKAPSRRSSSLA), and 962–988 (FGRDSPVASRRSSHSTRKSSSSDARRI). The span at 880-900 (QSRQTSFASTASTASVVSSTS) shows a compositional bias: low complexity. Pro residues predominate over residues 938–947 (PLEPLPPVPK). The segment covering 979 to 988 (KSSSSDARRI) has biased composition (low complexity). A phosphoserine mark is found at Ser-1289, Ser-1307, and Ser-1356. 3 disordered regions span residues 1312 to 1467 (SPAT…DLDS), 1604 to 1686 (PIFA…NKRF), and 1706 to 1753 (SAVN…GKRR). The segment covering 1344-1379 (VSRQQNFPRRSSSFTETVPTEPTRYNYQNLDSSKSN) has biased composition (polar residues). Over residues 1399–1430 (NFDKYKVETLQKRNSNDGKDLDRTNDPLKNRG) the composition is skewed to basic and acidic residues. Polar residues predominate over residues 1653–1677 (IKFSQAPSTQISPRTSVTDFTASQQ). Position 1664 is a phosphoserine (Ser-1664). Residues 1711–1723 (GRKESEGHCEDRS) are compositionally biased toward basic and acidic residues.

It localises to the cytoplasm. Its function is as follows. Negatively regulates early sporulation-specific genes. Seems to exert its function by positively regulating the Ras/cAMP pathway. Required for growth under alkaline conditions. Acts synergetically with MDS3. This chain is Negative regulator of sporulation PMD1 (PMD1), found in Saccharomyces cerevisiae (strain ATCC 204508 / S288c) (Baker's yeast).